A 179-amino-acid chain; its full sequence is Translation initiation factor IF-3 (179 aa).

It belongs to the IF-3 family. Monomer.

It localises to the cytoplasm. IF-3 binds to the 30S ribosomal subunit and shifts the equilibrium between 70S ribosomes and their 50S and 30S subunits in favor of the free subunits, thus enhancing the availability of 30S subunits on which protein synthesis initiation begins. The protein is Translation initiation factor IF-3 of Leptospira interrogans serogroup Icterohaemorrhagiae serovar copenhageni (strain Fiocruz L1-130).